A 1085-amino-acid polypeptide reads, in one-letter code: Activating transcription factor 7-interacting protein 1 (1085 aa).

Disordered regions lie at residues methionine 1–aspartate 22, glycine 47–threonine 109, leucine 127–serine 245, proline 329–lysine 381, alanine 469–asparagine 499, arginine 517–proline 560, alanine 650–histidine 843, asparagine 889–serine 910, and glycine 932–serine 975. The segment covering serine 54 to aspartate 64 has biased composition (polar residues). Basic and acidic residues-rich tracts occupy residues serine 82–alanine 91 and asparagine 133–aspartate 150. Polar residues-rich tracts occupy residues threonine 151–serine 165 and asparagine 173–proline 182. 2 stretches are compositionally biased toward basic and acidic residues: residues glutamate 347–histidine 379 and alanine 469–glutamate 479. The stretch at asparagine 446–asparagine 480 forms a coiled coil. Composition is skewed to low complexity over residues serine 487 to asparagine 499, alanine 529 to serine 547, and serine 651 to proline 666. Polar residues predominate over residues glycine 667 to arginine 717. Over residues threonine 732–proline 743 the composition is skewed to low complexity. Polar residues-rich tracts occupy residues glutamate 746 to serine 775, serine 792 to isoleucine 810, and threonine 830 to histidine 843. Residues proline 950–proline 968 show a composition bias toward pro residues. The Fibronectin type-III domain occupies leucine 976 to serine 1082.

This sequence belongs to the MCAF family.

The protein resides in the nucleus. In terms of biological role, recruiter that couples transcriptional factors to general transcription apparatus and thereby modulates transcription regulation and chromatin formation. Can both act as an activator or a repressor depending on the context. Mediates MBD1-dependent transcriptional repression, probably by recruiting complexes containing histone methyltransferase activity. May belong to a complex that represses transcription and couples DNA methylation and histone H3 'Lys-9' trimethylation (H3K9me3). The sequence is that of Activating transcription factor 7-interacting protein 1 (ATF7IP) from Gallus gallus (Chicken).